The chain runs to 257 residues: Kallikrein-1 (257 aa).

Positions 1–18 (MWFLVLCLALSLGGTGRA) are cleaved as a signal peptide. The propeptide at 19–24 (PPIQSR) is activation peptide. Positions 25–254 (IVGGWECSQP…YVKWIEDTIA (230 aa)) constitute a Peptidase S1 domain. Cystine bridges form between C31-C169, C47-C63, C148-C215, C180-C194, and C205-C230. The active-site Charge relay system is H62. S90 is a glycosylation site (O-linked (GalNAc...) serine). Residue N99 is glycosylated (N-linked (GlcNAc...) asparagine). S101 is a glycosylation site (O-linked (GalNAc...) serine). The N-linked (GlcNAc...) asparagine glycan is linked to N105. D116 (charge relay system) is an active-site residue. N-linked (GlcNAc...) asparagine glycosylation occurs at N160. S162 carries O-linked (GalNAc...) serine glycosylation. S209 acts as the Charge relay system in catalysis.

It belongs to the peptidase S1 family. Kallikrein subfamily.

The enzyme catalyses Preferential cleavage of Arg-|-Xaa bonds in small molecule substrates. Highly selective action to release kallidin (lysyl-bradykinin) from kininogen involves hydrolysis of Met-|-Xaa or Leu-|-Xaa.. In terms of biological role, glandular kallikreins cleave Met-Lys and Arg-Ser bonds in kininogen to release Lys-bradykinin. This chain is Kallikrein-1 (KLK1), found in Macaca fascicularis (Crab-eating macaque).